A 409-amino-acid polypeptide reads, in one-letter code: Cobalt-precorrin-5B C(1)-methyltransferase (409 aa).

It belongs to the CbiD family.

It carries out the reaction Co-precorrin-5B + S-adenosyl-L-methionine = Co-precorrin-6A + S-adenosyl-L-homocysteine. It functions in the pathway cofactor biosynthesis; adenosylcobalamin biosynthesis; cob(II)yrinate a,c-diamide from sirohydrochlorin (anaerobic route): step 6/10. Its function is as follows. Catalyzes the methylation of C-1 in cobalt-precorrin-5B to form cobalt-precorrin-6A. This Methanopyrus kandleri (strain AV19 / DSM 6324 / JCM 9639 / NBRC 100938) protein is Cobalt-precorrin-5B C(1)-methyltransferase.